A 222-amino-acid chain; its full sequence is MKPSADHPWPVDLGEARVIQERIRAQVITCDAFGPIRTVAGVDAGYSGDSALAAVVVLAFPSLQALDYAVARRQISFPYVPGYLSFREAPAVLDALASLRITPDLLMCDGHGLAHPRRCGIACHLGVLTDLPSIGCAKSVLVGAHDPLPDVRGAWTPLRHDDEIVGAALRTRPGVRPVYVSVGHRVSLETAIQFVMACVTRYRLPETTRAADALASQGRIPR.

Mg(2+) is bound by residues aspartate 43 and aspartate 109.

This sequence belongs to the endonuclease V family. Mg(2+) is required as a cofactor.

The protein resides in the cytoplasm. The catalysed reaction is Endonucleolytic cleavage at apurinic or apyrimidinic sites to products with a 5'-phosphate.. Its function is as follows. DNA repair enzyme involved in the repair of deaminated bases. Selectively cleaves double-stranded DNA at the second phosphodiester bond 3' to a deoxyinosine leaving behind the intact lesion on the nicked DNA. This chain is Endonuclease V, found in Roseiflexus castenholzii (strain DSM 13941 / HLO8).